Consider the following 433-residue polypeptide: 28S rRNA (cytosine-C(5))-methyltransferase (433 aa).

Residues 235–241 (CAAPGMK), Glu-259, Asp-286, and Asp-304 each bind S-adenosyl-L-methionine. The active-site Nucleophile is Cys-357.

This sequence belongs to the class I-like SAM-binding methyltransferase superfamily. RsmB/NOP family.

It carries out the reaction a cytidine in 28S rRNA + S-adenosyl-L-methionine = a 5-methylcytidine in 28S rRNA + S-adenosyl-L-homocysteine + H(+). S-adenosyl-L-methionine-dependent methyltransferase that specifically methylates the C(5) position of a cytosine in 28S rRNA. This is 28S rRNA (cytosine-C(5))-methyltransferase from Drosophila melanogaster (Fruit fly).